Reading from the N-terminus, the 129-residue chain is Lysozyme C-2 (129 aa).

The 129-residue stretch at 1 to 129 (KVFERCELAR…VSSYVEGCTL (129 aa)) folds into the C-type lysozyme domain. 4 disulfides stabilise this stretch: C6–C127, C30–C115, C65–C81, and C77–C95. Residues E35 and D53 contribute to the active site.

Belongs to the glycosyl hydrolase 22 family. As to quaternary structure, monomer.

The catalysed reaction is Hydrolysis of (1-&gt;4)-beta-linkages between N-acetylmuramic acid and N-acetyl-D-glucosamine residues in a peptidoglycan and between N-acetyl-D-glucosamine residues in chitodextrins.. Functionally, lysozymes have primarily a bacteriolytic function; those in tissues and body fluids are associated with the monocyte-macrophage system and enhance the activity of immunoagents. The protein is Lysozyme C-2 of Capra hircus (Goat).